The primary structure comprises 474 residues: NAD(P) transhydrogenase subunit beta (474 aa).

Helical transmembrane passes span 4 to 24 (GLVQ…LAGL), 46 to 66 (IATI…AMII), 83 to 103 (MPEL…LVGF), 132 to 152 (VLTN…AVTF), 181 to 200 (LAAL…NPES), 202 to 222 (FPVL…VASI), 229 to 249 (VVVS…GFIL), 253 to 273 (LLIV…YIMC), and 321 to 341 (VIIT…VADI).

Belongs to the PNT beta subunit family. Heterodimer of an alpha and a beta chain.

The protein resides in the cell inner membrane. It carries out the reaction NAD(+) + NADPH + H(+)(in) = NADH + NADP(+) + H(+)(out). Functionally, the transhydrogenation between NADH and NADP is coupled to respiration and ATP hydrolysis and functions as a proton pump across the membrane. The polypeptide is NAD(P) transhydrogenase subunit beta (pntB) (Haemophilus influenzae (strain ATCC 51907 / DSM 11121 / KW20 / Rd)).